We begin with the raw amino-acid sequence, 939 residues long: Translation initiation factor IF-2 (939 aa).

2 disordered regions span residues 51 to 81 (LGTK…GGKK) and 137 to 353 (VTNK…EMKA). Positions 181-210 (NEKKAGAPEIKRAEHTETVEKSKTAVDSKK) are enriched in basic and acidic residues. Low complexity predominate over residues 259-277 (PVNRSPRPSTPSPNRSAGG). The segment covering 300-312 (RRDEKPAERDSRP) has biased composition (basic and acidic residues). The tr-type G domain maps to 437–606 (GRCPVVTVMG…QLAAEMLELK (170 aa)). Positions 446-453 (GHVDHGKT) are G1. 446-453 (GHVDHGKT) lines the GTP pocket. A G2 region spans residues 471 to 475 (GITQH). Residues 492–495 (DTPG) form a G3 region. Residues 492–496 (DTPGH) and 546–549 (NKID) each bind GTP. Residues 546 to 549 (NKID) form a G4 region. Residues 582 to 584 (SAK) are G5.

Belongs to the TRAFAC class translation factor GTPase superfamily. Classic translation factor GTPase family. IF-2 subfamily.

The protein localises to the cytoplasm. One of the essential components for the initiation of protein synthesis. Protects formylmethionyl-tRNA from spontaneous hydrolysis and promotes its binding to the 30S ribosomal subunits. Also involved in the hydrolysis of GTP during the formation of the 70S ribosomal complex. This chain is Translation initiation factor IF-2, found in Desulfotalea psychrophila (strain LSv54 / DSM 12343).